The sequence spans 189 residues: Putative manganese efflux pump MntP (189 aa).

A run of 6 helical transmembrane segments spans residues 3 to 23 (PVSLIFLAFAMSTDAFAAAIG), 41 to 61 (IIFGVIEAITPLVGWLLGQAA), 65 to 85 (VADWDHWIAFVLLVLLGLHMI), 106 to 128 (WILAVTALATSIDALAVGVGLAF), 141 to 161 (GLATMTMVTLGTMLGRALGAV), and 168 to 188 (MVGGVVLILVGATILYEHLSA).

The protein belongs to the MntP (TC 9.B.29) family.

It localises to the cell inner membrane. In terms of biological role, probably functions as a manganese efflux pump. This chain is Putative manganese efflux pump MntP, found in Pseudomonas aeruginosa (strain LESB58).